A 362-amino-acid chain; its full sequence is RNA-binding protein 4 (362 aa).

RRM domains are found at residues 2 to 72 (VKLF…ASKN) and 78 to 148 (TKLH…LSTS). Lys-79 is covalently cross-linked (Glycyl lysine isopeptide (Lys-Gly) (interchain with G-Cter in SUMO2)). The residue at position 86 (Ser-86) is a Phosphoserine. Lys-92 is covalently cross-linked (Glycyl lysine isopeptide (Lys-Gly) (interchain with G-Cter in SUMO2)). Residues 160–177 (SGCYRCGKEGHWSKECPV) form a CCHC-type zinc finger. Positions 196–362 (AVRTPYTMGY…YADRARYSAF (167 aa)) are interaction with TNPO3. The interval 306-336 (RSPLRRATGPVPTVGEGYGYGHESELSQGSS) is disordered. Ser-307 bears the Phosphoserine mark.

As to quaternary structure, interacts with TNPO3; the interaction mediates nuclear import of the protein and is disrupted by nuclear Ran bound to GTP. Interacts with EIF4G1 and WT1. Interacts with EIF4A1; the interaction is modulated under stress-induced conditions. Interacts with AGO1. Interacts with AGO2; the interaction occurs under both cell proliferation and differentiation conditions and in an RNA- and phosphorylation-independent manner. Interacts with DDX5; the interaction occurs in an RNA-independent manner. Interacts with RBPMS; the interaction allows cooperative assembly of RNA-bound stable cell-specific alternative splicing regulatory complexes. Post-translationally, phosphorylated. Phosphorylated in vitro on Ser-307 by SRPK1. Phosphorylation on Ser-307 is induced upon cell stress signaling, which alters its subcellular localization and may modulate its activity on IRES-mediated mRNA translation. Phosphorylation on Ser-307 is induced upon cell muscle differentiation.

It is found in the nucleus. Its subcellular location is the nucleolus. It localises to the nucleus speckle. The protein resides in the cytoplasm. The protein localises to the cytoplasmic granule. RNA-binding factor involved in multiple aspects of cellular processes like alternative splicing of pre-mRNA and translation regulation. Modulates alternative 5'-splice site and exon selection. Acts as a muscle cell differentiation-promoting factor. Activates exon skipping of the PTB pre-mRNA during muscle cell differentiation. Antagonizes the activity of the splicing factor PTBP1 to modulate muscle cell-specific exon selection of alpha tropomyosin. Binds to intronic pyrimidine-rich sequence of the TPM1 and MAPT pre-mRNAs. Required for the translational activation of PER1 mRNA in response to circadian clock. Binds directly to the 3'-UTR of the PER1 mRNA. Exerts a suppressive activity on Cap-dependent translation via binding to CU-rich responsive elements within the 3'UTR of mRNAs, a process increased under stress conditions or during myocytes differentiation. Recruits EIF4A1 to stimulate IRES-dependent translation initiation in respons to cellular stress. Associates to internal ribosome entry segment (IRES) in target mRNA species under stress conditions. Plays a role for miRNA-guided RNA cleavage and translation suppression by promoting association of AGO2-containing miRNPs with their cognate target mRNAs. Associates with miRNAs during muscle cell differentiation. Binds preferentially to 5'-CGCGCG[GCA]-3' motif in vitro. This chain is RNA-binding protein 4 (RBM4), found in Bos taurus (Bovine).